A 201-amino-acid chain; its full sequence is Peptidyl-tRNA hydrolase (201 aa).

Position 14 (Y14) interacts with tRNA. Catalysis depends on H19, which acts as the Proton acceptor. TRNA is bound by residues Y64, N66, and N112.

Belongs to the PTH family. As to quaternary structure, monomer.

It localises to the cytoplasm. The catalysed reaction is an N-acyl-L-alpha-aminoacyl-tRNA + H2O = an N-acyl-L-amino acid + a tRNA + H(+). Its function is as follows. Hydrolyzes ribosome-free peptidyl-tRNAs (with 1 or more amino acids incorporated), which drop off the ribosome during protein synthesis, or as a result of ribosome stalling. Functionally, catalyzes the release of premature peptidyl moieties from peptidyl-tRNA molecules trapped in stalled 50S ribosomal subunits, and thus maintains levels of free tRNAs and 50S ribosomes. This is Peptidyl-tRNA hydrolase from Bradyrhizobium sp. (strain ORS 278).